Reading from the N-terminus, the 549-residue chain is SET and MYND domain-containing protein DDB_G0277331 (549 aa).

The SET domain occupies 27 to 283 (KGIELRYCDG…KDEELFINYS (257 aa)). Residues C71, C74, C90, C93, C99, C103, H111, and C115 each contribute to the Zn(2+) site. The segment at 71–115 (CDECLKNKLDLEEGKTLKRCSNCKLVYYCSTDCQTKAWKIHKQEC) adopts an MYND-type zinc-finger fold. Positions 340–401 (NINNNNNNNN…IIKNLQNKLS (62 aa)) form a coiled coil.

The protein belongs to the class V-like SAM-binding methyltransferase superfamily.

Probable methyltransferase. The protein is SET and MYND domain-containing protein DDB_G0277331 of Dictyostelium discoideum (Social amoeba).